The chain runs to 224 residues: Ribose-5-phosphate isomerase A (224 aa).

Residues 33 to 36 (TGST), 86 to 89 (DGAD), and 99 to 102 (KGGG) contribute to the substrate site. Glu-108 (proton acceptor) is an active-site residue. Lys-126 contributes to the substrate binding site.

The protein belongs to the ribose 5-phosphate isomerase family. Homodimer.

The catalysed reaction is aldehydo-D-ribose 5-phosphate = D-ribulose 5-phosphate. It functions in the pathway carbohydrate degradation; pentose phosphate pathway; D-ribose 5-phosphate from D-ribulose 5-phosphate (non-oxidative stage): step 1/1. Catalyzes the reversible conversion of ribose-5-phosphate to ribulose 5-phosphate. The chain is Ribose-5-phosphate isomerase A from Bordetella avium (strain 197N).